The sequence spans 521 residues: Type II methyltransferase M.AluI (521 aa).

The 484-residue stretch at 8–491 (YSFVDLFAGI…REHVRRDRAL (484 aa)) folds into the SAM-dependent MTase C5-type domain. Cysteine 84 is a catalytic residue.

It belongs to the class I-like SAM-binding methyltransferase superfamily. C5-methyltransferase family.

The catalysed reaction is a 2'-deoxycytidine in DNA + S-adenosyl-L-methionine = a 5-methyl-2'-deoxycytidine in DNA + S-adenosyl-L-homocysteine + H(+). Functionally, a methylase, recognizes the double-stranded sequence 5'-AGCT-3', methylates C-3 on both strands, and protects the DNA from cleavage by the AluI endonuclease. This Cellulosimicrobium cellulans (Arthrobacter luteus) protein is Type II methyltransferase M.AluI.